Reading from the N-terminus, the 657-residue chain is Hemocyanin B chain (657 aa).

Cysteines 93 and 98 form a disulfide. N-linked (GlcNAc...) asparagine glycosylation is present at asparagine 167. Residues histidine 194, histidine 198, histidine 224, histidine 344, histidine 348, and histidine 384 each coordinate Cu cation. 2 disulfide bridges follow: cysteine 483/cysteine 502 and cysteine 562/cysteine 609.

This sequence belongs to the tyrosinase family. Hemocyanin subfamily. In terms of assembly, hexamer of a number of different chains, of which A, B, and C have been identified. As to expression, hemolymph.

Its subcellular location is the secreted. It is found in the extracellular space. Hemocyanins are copper-containing oxygen carriers occurring freely dissolved in the hemolymph of many mollusks and arthropods. This is Hemocyanin B chain from Panulirus interruptus (California spiny lobster).